The chain runs to 110 residues: Class I hydrophobin 2 (110 aa).

The signal sequence occupies residues M1–A19. Disulfide bonds link C29–C89, C36–C83, C37–C70, and C90–C103.

The protein belongs to the fungal hydrophobin family. Self-assembles to form functional amyloid fibrils called rodlets. Self-assembly into fibrillar rodlets occurs spontaneously at hydrophobic:hydrophilic interfaces and the rodlets further associate laterally to form amphipathic monolayers.

The protein localises to the secreted. The protein resides in the cell wall. Its function is as follows. Aerial growth, conidiation, and dispersal of filamentous fungi in the environment rely upon a capability of their secreting small amphipathic proteins called hydrophobins (HPBs) with low sequence identity. Class I can self-assemble into an outermost layer of rodlet bundles on aerial cell surfaces, conferring cellular hydrophobicity that supports fungal growth, development and dispersal; whereas Class II form highly ordered films at water-air interfaces through intermolecular interactions but contribute nothing to the rodlet structure. Pnh2 is a class I hydrophobin that might be involved in the attachment of the hydrophilic wall of hyphae to the hydrophobic surface of wood under inorganic phosphate (Pi)-deficient conditions and enable the mycelium to degrade efficiently the components of wood and to acquire nutrients containing Pi. This Pholiota nameko protein is Class I hydrophobin 2.